Consider the following 169-residue polypeptide: MRLSVRWVFFLGFFLCALMLAIAGYFQFVENLEPCPLCILSRVAVLAIGGVFLVAALHNPKSWGIKVYALLGFVVTLIGIGITGRHVWLQSLPADQVPACGPGLNFMLDNFPLTETLELVFRGSGECAEVQWSFLGLTIPGWTLVAFLFLGVISLWQMGRTGGGAGKLT.

Residues 1 to 8 (MRLSVRWV) lie on the Cytoplasmic side of the membrane. A helical transmembrane segment spans residues 9 to 25 (FFLGFFLCALMLAIAGY). Residues 26-43 (FQFVENLEPCPLCILSRV) lie on the Periplasmic side of the membrane. A disulfide bond links C35 and C38. A helical transmembrane segment spans residues 44-60 (AVLAIGGVFLVAALHNP). Residues 61-67 (KSWGIKV) lie on the Cytoplasmic side of the membrane. A helical membrane pass occupies residues 68–84 (YALLGFVVTLIGIGITG). The Periplasmic portion of the chain corresponds to 85 to 141 (RHVWLQSLPADQVPACGPGLNFMLDNFPLTETLELVFRGSGECAEVQWSFLGLTIPG). The cysteines at positions 100 and 127 are disulfide-linked. The chain crosses the membrane as a helical span at residues 142–160 (WTLVAFLFLGVISLWQMGR). At 161–169 (TGGGAGKLT) the chain is on the cytoplasmic side.

Belongs to the DsbB family.

It is found in the cell inner membrane. Functionally, required for disulfide bond formation in some periplasmic proteins. Acts by oxidizing the DsbA protein. This is Disulfide bond formation protein B from Nitrosococcus oceani (strain ATCC 19707 / BCRC 17464 / JCM 30415 / NCIMB 11848 / C-107).